The following is a 148-amino-acid chain: Ribosome maturation factor RimP (148 aa).

This sequence belongs to the RimP family.

It is found in the cytoplasm. Its function is as follows. Required for maturation of 30S ribosomal subunits. The sequence is that of Ribosome maturation factor RimP from Treponema denticola (strain ATCC 35405 / DSM 14222 / CIP 103919 / JCM 8153 / KCTC 15104).